A 711-amino-acid polypeptide reads, in one-letter code: MVATVTDEQSAARELVRGWARTAASGAAATAAVRDMEYGFEEGNADAWRPVFAGLAGLGLFGVAVPEDCGGAGGSIEDLCAMVDEAARALVPGPVATTAVATLVVSDPKLRSALASGERFAGVAIDGGVQVDPKTSTASGTVGRVLGGAPGGVVLLPADGNWLLVDTACDEVVVEPLRATDFSLPLARMVLTSAPVTVLEVSGERVEDLAATVLAAEAAGVARWTLDTAVAYAKVREQFGKPIGSFQAVKHLCAQMLCRAEQADVAAADAARAAADSDGTQLSIAAAVAASIGIDAAKANAKDCIQVLGGIGCTWEHDAHLYLRRAHGIGGFLGGSGRWLRRVTALTQAGVRRRLGVDLAEVAGLRPEIAAAVAEVAALPEEKRQVALADTGLLAPHWPAPYGRGASPAEQLLIDQELAAAKVERPDLVIGWWAAPTILEHGTPEQIERFVPATMRGEFLWCQLFSEPGAGSDLASLRTKAVRADGGWLLTGQKVWTSAAHKARWGVCLARTDPDAPKHKGITYFLVDMTTPGIEIRPLREITGDSLFNEVFLDNVFVPDEMVVGAVNDGWRLARTTLANERVAMATGTALGNPMEELLKVLGDMELDVAQQDRLGRLILLAQAGALLDRRIAELAVGGQDPGAQSSVRKLIGVRYRQALAEYLMEVSDGGGLVENRAVYDFLNTRCLTIAGGTEQILLTVAAERLLGLPR.

The protein belongs to the acyl-CoA dehydrogenase family. In terms of assembly, homodimer. Requires FAD as cofactor.

It carries out the reaction 3-oxochol-4-en-24-oyl-CoA + A = (22E)-3-oxochola-4,22-dien-24-oyl-CoA + AH2. The enzyme catalyses 3beta-hydroxy-chol-5-ene-24-oyl-CoA + A = 3beta-hydroxy-chol-5,22-dien-24-oyl-CoA + AH2. It functions in the pathway steroid metabolism; cholesterol degradation. Functionally, involved in the second cycle of side chain dehydrogenation in the beta-oxidation of cholesterol catabolism. It contributes partly to the virulence by increasing the efficiency of beta-oxidation. Catalyzes the dehydrogenation of the five-carbon steroid side chain of 3-oxo-chol-4-en-24-oyl-CoA (3-OCO-CoA) to yield 3-oxochol-4,22-dien-24-oyl-CoA. Can also use 3beta-hydroxy-chol-5-ene-24-oyl-CoA, and shows weak activity with cholyl-CoA and deoxycholyl-CoA. This is Acyl-CoA dehydrogenase FadE34 (fadE34) from Mycobacterium tuberculosis (strain ATCC 25618 / H37Rv).